Here is an 871-residue protein sequence, read N- to C-terminus: Alanine--tRNA ligase (871 aa).

Residues His-561, His-565, Cys-662, and His-666 each contribute to the Zn(2+) site.

It belongs to the class-II aminoacyl-tRNA synthetase family. Zn(2+) serves as cofactor.

It is found in the cytoplasm. The enzyme catalyses tRNA(Ala) + L-alanine + ATP = L-alanyl-tRNA(Ala) + AMP + diphosphate. Catalyzes the attachment of alanine to tRNA(Ala) in a two-step reaction: alanine is first activated by ATP to form Ala-AMP and then transferred to the acceptor end of tRNA(Ala). Also edits incorrectly charged Ser-tRNA(Ala) and Gly-tRNA(Ala) via its editing domain. The chain is Alanine--tRNA ligase from Dechloromonas aromatica (strain RCB).